The sequence spans 341 residues: S-adenosylmethionine:tRNA ribosyltransferase-isomerase (341 aa).

Belongs to the QueA family. In terms of assembly, monomer.

The protein localises to the cytoplasm. The catalysed reaction is 7-aminomethyl-7-carbaguanosine(34) in tRNA + S-adenosyl-L-methionine = epoxyqueuosine(34) in tRNA + adenine + L-methionine + 2 H(+). It participates in tRNA modification; tRNA-queuosine biosynthesis. Transfers and isomerizes the ribose moiety from AdoMet to the 7-aminomethyl group of 7-deazaguanine (preQ1-tRNA) to give epoxyqueuosine (oQ-tRNA). In Staphylococcus aureus (strain Mu3 / ATCC 700698), this protein is S-adenosylmethionine:tRNA ribosyltransferase-isomerase.